The primary structure comprises 555 residues: Potassium-transporting ATPase potassium-binding subunit (555 aa).

A run of 10 helical transmembrane segments spans residues 2-22, 60-80, 130-150, 173-193, 246-266, 278-298, 374-394, 412-432, 483-503, and 525-545; these read IWVA…PTGI, QYAL…YFIF, IGIT…VMAF, VFLP…VPQT, MSNI…PFTY, ILFV…TTSE, AGFV…GLMV, LIAV…ALAL, LVMF…AASL, and GIFI…MLVL.

It belongs to the KdpA family. In terms of assembly, the system is composed of three essential subunits: KdpA, KdpB and KdpC.

It is found in the cell membrane. Part of the high-affinity ATP-driven potassium transport (or Kdp) system, which catalyzes the hydrolysis of ATP coupled with the electrogenic transport of potassium into the cytoplasm. This subunit binds the extracellular potassium ions and delivers the ions to the membrane domain of KdpB through an intramembrane tunnel. The sequence is that of Potassium-transporting ATPase potassium-binding subunit from Bacillus thuringiensis (strain Al Hakam).